Reading from the N-terminus, the 480-residue chain is Cytochrome b-c1 complex subunit 1, mitochondrial (480 aa).

A mitochondrion-targeting transit peptide spans Met-1–Gly-34. 2 positions are modified to N6-acetyllysine: Lys-111 and Lys-138. An N6-acetyllysine; alternate modification is found at Lys-163. Lys-163 bears the N6-succinyllysine; alternate mark. Ser-212 is modified (phosphoserine). At Thr-214 the chain carries Phosphothreonine. Position 248 is an N6-acetyllysine (Lys-248).

This sequence belongs to the peptidase M16 family. UQCRC1/QCR1 subfamily. Component of the ubiquinol-cytochrome c oxidoreductase (cytochrome b-c1 complex, complex III, CIII), a multisubunit enzyme composed of 11 subunits. The complex is composed of 3 respiratory subunits cytochrome b, cytochrome c1 and Rieske protein UQCRFS1, 2 core protein subunits UQCRC1/QCR1 and UQCRC2/QCR2, and 6 low-molecular weight protein subunits UQCRH/QCR6, UQCRB/QCR7, UQCRQ/QCR8, UQCR10/QCR9, UQCR11/QCR10 and subunit 9, the cleavage product of Rieske protein UQCRFS1. The complex exists as an obligatory dimer and forms supercomplexes (SCs) in the inner mitochondrial membrane with NADH-ubiquinone oxidoreductase (complex I, CI) and cytochrome c oxidase (complex IV, CIV), resulting in different assemblies (supercomplex SCI(1)III(2)IV(1) and megacomplex MCI(2)III(2)IV(2)). Interacts with UQCC6. Interacts with STMP1. In terms of processing, acetylation of Lys-138 is observed in liver mitochondria from fasted mice but not from fed mice. Expressed in neurons and astrocytes of the cerebral cortex and hippocampus (at protein level).

The protein localises to the mitochondrion inner membrane. Its function is as follows. Component of the ubiquinol-cytochrome c oxidoreductase, a multisubunit transmembrane complex that is part of the mitochondrial electron transport chain which drives oxidative phosphorylation. The respiratory chain contains 3 multisubunit complexes succinate dehydrogenase (complex II, CII), ubiquinol-cytochrome c oxidoreductase (cytochrome b-c1 complex, complex III, CIII) and cytochrome c oxidase (complex IV, CIV), that cooperate to transfer electrons derived from NADH and succinate to molecular oxygen, creating an electrochemical gradient over the inner membrane that drives transmembrane transport and the ATP synthase. The cytochrome b-c1 complex catalyzes electron transfer from ubiquinol to cytochrome c, linking this redox reaction to translocation of protons across the mitochondrial inner membrane, with protons being carried across the membrane as hydrogens on the quinol. In the process called Q cycle, 2 protons are consumed from the matrix, 4 protons are released into the intermembrane space and 2 electrons are passed to cytochrome c. The 2 core subunits UQCRC1/QCR1 and UQCRC2/QCR2 are homologous to the 2 mitochondrial-processing peptidase (MPP) subunits beta-MPP and alpha-MPP respectively, and they seem to have preserved their MPP processing properties. May be involved in the in situ processing of UQCRFS1 into the mature Rieske protein and its mitochondrial targeting sequence (MTS)/subunit 9 when incorporated into complex III. Seems to play an important role in the maintenance of proper mitochondrial function in nigral dopaminergic neurons. The protein is Cytochrome b-c1 complex subunit 1, mitochondrial (Uqcrc1) of Mus musculus (Mouse).